The sequence spans 638 residues: Zinc finger protein 143 (638 aa).

At Met-1 the chain carries N-acetylmethionine. Lys-213 participates in a covalent cross-link: Glycyl lysine isopeptide (Lys-Gly) (interchain with G-Cter in SUMO2). 4 consecutive C2H2-type zinc fingers follow at residues 237–261 (FRCK…ERSH), 267–291 (YQCE…FRTH), 297–321 (YRCS…IRTH), and 327–351 (FKCP…IRTH). Thr-352 carries the phosphothreonine modification. 3 C2H2-type zinc fingers span residues 357 to 381 (YYCT…VRIH), 387 to 411 (YVCT…HVVH), and 417 to 440 (YNCN…RTAH). Residue Lys-406 forms a Glycyl lysine isopeptide (Lys-Gly) (interchain with G-Cter in SUMO2) linkage.

This sequence belongs to the GLI C2H2-type zinc-finger protein family. Interacts with CHD8. Forms a complex with HCFC1 and ZNF143.

The protein localises to the nucleus. Functionally, transcriptional activator. Activates the gene for selenocysteine tRNA (tRNAsec). Binds to the SPH motif of small nuclear RNA (snRNA) gene promoters. Participates in efficient U6 RNA polymerase III transcription via its interaction with CHD8. In complex with HCFC1 and ZNF143, regulates the expression of several genes, including AP2S1, ESCO2, OPHN1, RBL1, UBXN8 and ZNF32. The chain is Zinc finger protein 143 (Znf143) from Mus musculus (Mouse).